A 309-amino-acid chain; its full sequence is Dehydrogenase/reductase SDR family member 7B (309 aa).

The Cytoplasmic portion of the chain corresponds to 1-4; it reads MDLT. The chain crosses the membrane as a helical; Signal-anchor for type II membrane protein span at residues 5–25; that stretch reads TWAIFPLLLGSIGVYSLYKLL. Residues 26 to 272 are Lumenal-facing; the sequence is QRLRSGAYLQ…AVGERRKELL (247 aa). Residues Ser46 and Leu48 each coordinate NAD(+). Ser178 serves as a coordination point for substrate. Positions 191, 195, and 226 each coordinate NAD(+). Tyr191 (proton acceptor) is an active-site residue.

This sequence belongs to the short-chain dehydrogenases/reductases (SDR) family.

It is found in the endoplasmic reticulum membrane. In terms of biological role, putative oxidoreductase. This Xenopus tropicalis (Western clawed frog) protein is Dehydrogenase/reductase SDR family member 7B (dhrs7b).